A 305-amino-acid chain; its full sequence is Glycine--tRNA ligase alpha subunit (305 aa).

The protein belongs to the class-II aminoacyl-tRNA synthetase family. Tetramer of two alpha and two beta subunits.

It localises to the cytoplasm. It catalyses the reaction tRNA(Gly) + glycine + ATP = glycyl-tRNA(Gly) + AMP + diphosphate. In Streptococcus pneumoniae (strain CGSP14), this protein is Glycine--tRNA ligase alpha subunit.